The chain runs to 622 residues: Low affinity potassium transport system protein Kup (622 aa).

The next 12 membrane-spanning stretches (helical) occupy residues 12–32 (ITLA…LYTL), 49–69 (VFGF…LKYL), 101–121 (FLVI…VITP), 134–154 (IIAP…LTLL), 163–183 (GLVG…LAAL), 213–233 (VSFV…ALYA), 247–267 (WFTV…ALLL), 276–296 (PFFL…ATLA), 337–357 (IYIP…IVSF), 363–383 (LAAA…ILST), 395–415 (FLVA…FSAN), and 419–439 (IVSG…VMTT).

This sequence belongs to the HAK/KUP transporter (TC 2.A.72) family.

It localises to the cell inner membrane. The enzyme catalyses K(+)(in) + H(+)(in) = K(+)(out) + H(+)(out). Functionally, responsible for the low-affinity transport of potassium into the cell. Likely operates as a K(+):H(+) symporter. The polypeptide is Low affinity potassium transport system protein Kup (Enterobacter sp. (strain 638)).